The following is a 584-amino-acid chain: Arginine--tRNA ligase (584 aa).

A 'HIGH' region motif is present at residues 126 to 136 (PNIAKEMHVGH).

Belongs to the class-I aminoacyl-tRNA synthetase family. Monomer.

The protein localises to the cytoplasm. It carries out the reaction tRNA(Arg) + L-arginine + ATP = L-arginyl-tRNA(Arg) + AMP + diphosphate. In Synechococcus sp. (strain ATCC 27144 / PCC 6301 / SAUG 1402/1) (Anacystis nidulans), this protein is Arginine--tRNA ligase.